A 127-amino-acid polypeptide reads, in one-letter code: Large ribosomal subunit protein bL17 (127 aa).

Belongs to the bacterial ribosomal protein bL17 family. As to quaternary structure, part of the 50S ribosomal subunit. Contacts protein L32.

The polypeptide is Large ribosomal subunit protein bL17 (Lactobacillus helveticus (strain DPC 4571)).